Reading from the N-terminus, the 126-residue chain is Large ribosomal subunit protein bL19 (126 aa).

The protein belongs to the bacterial ribosomal protein bL19 family.

Functionally, this protein is located at the 30S-50S ribosomal subunit interface and may play a role in the structure and function of the aminoacyl-tRNA binding site. The sequence is that of Large ribosomal subunit protein bL19 from Gluconacetobacter diazotrophicus (strain ATCC 49037 / DSM 5601 / CCUG 37298 / CIP 103539 / LMG 7603 / PAl5).